A 53-amino-acid chain; its full sequence is uncharacterized protein (53 aa).

Residues 18–38 (FLFFIFYFLFFFIFFTVFGNL) form a helical membrane-spanning segment.

The protein localises to the membrane. This is an uncharacterized protein from Dictyostelium discoideum (Social amoeba).